Reading from the N-terminus, the 130-residue chain is Small ribosomal subunit protein uS9 (130 aa).

The interval 102 to 130 is disordered; it reads GLLTRDSRMKERKKPGLKGARRAPQFSKR. A compositionally biased stretch (basic residues) spans 111 to 130; that stretch reads KERKKPGLKGARRAPQFSKR.

This sequence belongs to the universal ribosomal protein uS9 family.

The polypeptide is Small ribosomal subunit protein uS9 (Listeria monocytogenes serovar 1/2a (strain ATCC BAA-679 / EGD-e)).